A 510-amino-acid chain; its full sequence is NAD(P)H-quinone oxidoreductase subunit 2 A, chloroplastic (510 aa).

A run of 12 helical transmembrane segments spans residues 31–51 (FIFP…IDLT), 59–79 (WFYF…LFRW), 99–119 (IFQF…VEYI), 124–144 (MAIT…MFLC), 149–169 (LITI…LSGY), 183–203 (YLLM…WLYG), 229–249 (ISIA…PAPF), 295–315 (WHLL…LLAI), 323–343 (MLAY…IVGD), 354–374 (YMLF…LFGL), 395–415 (ALSL…AGFF), and 418–438 (LYLF…IGLL).

Belongs to the complex I subunit 2 family. As to quaternary structure, NDH is composed of at least 16 different subunits, 5 of which are encoded in the nucleus.

It is found in the plastid. The protein resides in the chloroplast thylakoid membrane. It carries out the reaction a plastoquinone + NADH + (n+1) H(+)(in) = a plastoquinol + NAD(+) + n H(+)(out). The catalysed reaction is a plastoquinone + NADPH + (n+1) H(+)(in) = a plastoquinol + NADP(+) + n H(+)(out). Functionally, NDH shuttles electrons from NAD(P)H:plastoquinone, via FMN and iron-sulfur (Fe-S) centers, to quinones in the photosynthetic chain and possibly in a chloroplast respiratory chain. The immediate electron acceptor for the enzyme in this species is believed to be plastoquinone. Couples the redox reaction to proton translocation, and thus conserves the redox energy in a proton gradient. This chain is NAD(P)H-quinone oxidoreductase subunit 2 A, chloroplastic, found in Saccharum officinarum (Sugarcane).